Reading from the N-terminus, the 212-residue chain is Superoxide dismutase [Fe] 1, chloroplastic (212 aa).

Residue Ala2 is modified to N-acetylalanine. His35, His87, Asp169, and His173 together coordinate Fe cation.

The protein belongs to the iron/manganese superoxide dismutase family. As to quaternary structure, homodimer. Interacts with cpn20/cpn21. Fe cation serves as cofactor.

It is found in the cell membrane. The protein localises to the plastid. The protein resides in the chloroplast membrane. It localises to the chloroplast stroma. The enzyme catalyses 2 superoxide + 2 H(+) = H2O2 + O2. Its activity is regulated as follows. Activated by cpn20/cpn21. Destroys superoxide anion radicals which are normally produced within the cells and which are toxic to biological systems. The polypeptide is Superoxide dismutase [Fe] 1, chloroplastic (FSD1) (Arabidopsis thaliana (Mouse-ear cress)).